The chain runs to 1119 residues: Isoleucine--tRNA ligase (1119 aa).

Positions 1–43 (MVPRRSRQRPASSCRTAKTARREMPYPLPAPDGQEPEAQPVTP) are disordered. The 'HIGH' region motif lies at 84 to 94 (PFANGLPHYGH). Residues 676–680 (KVSKS) carry the 'KMSKS' region motif. Lys679 is an ATP binding site.

This sequence belongs to the class-I aminoacyl-tRNA synthetase family. IleS type 2 subfamily. Monomer. Zn(2+) serves as cofactor.

It is found in the cytoplasm. It carries out the reaction tRNA(Ile) + L-isoleucine + ATP = L-isoleucyl-tRNA(Ile) + AMP + diphosphate. Functionally, catalyzes the attachment of isoleucine to tRNA(Ile). As IleRS can inadvertently accommodate and process structurally similar amino acids such as valine, to avoid such errors it has two additional distinct tRNA(Ile)-dependent editing activities. One activity is designated as 'pretransfer' editing and involves the hydrolysis of activated Val-AMP. The other activity is designated 'posttransfer' editing and involves deacylation of mischarged Val-tRNA(Ile). The chain is Isoleucine--tRNA ligase from Leifsonia xyli subsp. xyli (strain CTCB07).